The chain runs to 210 residues: Protein-L-isoaspartate O-methyltransferase (210 aa).

S52 is a catalytic residue.

This sequence belongs to the methyltransferase superfamily. L-isoaspartyl/D-aspartyl protein methyltransferase family.

It localises to the cytoplasm. The catalysed reaction is [protein]-L-isoaspartate + S-adenosyl-L-methionine = [protein]-L-isoaspartate alpha-methyl ester + S-adenosyl-L-homocysteine. Catalyzes the methyl esterification of L-isoaspartyl residues in peptides and proteins that result from spontaneous decomposition of normal L-aspartyl and L-asparaginyl residues. It plays a role in the repair and/or degradation of damaged proteins. This is Protein-L-isoaspartate O-methyltransferase from Protochlamydia amoebophila (strain UWE25).